Consider the following 398-residue polypeptide: Serine/threonine-protein kinase 32A (398 aa).

Gly2 carries the N-myristoyl glycine lipid modification. A Protein kinase domain is found at 23–281; it reads FEILRAIGKG…LTDIQNFPYM (259 aa). ATP-binding positions include 29–37 and Lys52; that span reads IGKGSFGKV. The Proton acceptor role is filled by Asp146. Positions 379 to 398 are disordered; sequence ALEQTKNNTEEEEDGQNNNL. Acidic residues predominate over residues 388–398; it reads EEEEDGQNNNL.

This sequence belongs to the protein kinase superfamily. Ser/Thr protein kinase family. Mg(2+) serves as cofactor.

It localises to the cell membrane. The enzyme catalyses L-seryl-[protein] + ATP = O-phospho-L-seryl-[protein] + ADP + H(+). It carries out the reaction L-threonyl-[protein] + ATP = O-phospho-L-threonyl-[protein] + ADP + H(+). This Mus musculus (Mouse) protein is Serine/threonine-protein kinase 32A.